The sequence spans 344 residues: AA9 family lytic polysaccharide monooxygenase cel61A (344 aa).

Residues 1–21 form the signal peptide; it reads MIQKLSNLLVTALAVATGVVG. Cu(2+) is bound at residue histidine 22. Intrachain disulfides connect cysteine 77/cysteine 198 and cysteine 118/cysteine 122. An N-linked (GlcNAc...) asparagine glycan is attached at asparagine 80. Residue histidine 107 participates in Cu(2+) binding. A glycan (N-linked (GlcNAc...) asparagine) is linked at asparagine 158. O2 is bound by residues histidine 184 and glutamine 193. Tyrosine 195 lines the Cu(2+) pocket. Residues 262–310 are disordered; that stretch reads ATASATVPGGGSGPTSRTTTTARTTQASSRPSSTPPATTSAPAGGPTQT. Over residues 275–310 the composition is skewed to low complexity; it reads PTSRTTTTARTTQASSRPSSTPPATTSAPAGGPTQT. Positions 307–343 constitute a CBM1 domain; sequence PTQTLYGQCGGSGYSGPTRCAPPATCSTLNPYYAQCL.

The protein belongs to the polysaccharide monooxygenase AA9 family. Requires Cu(2+) as cofactor.

Its subcellular location is the secreted. It catalyses the reaction [(1-&gt;4)-beta-D-glucosyl]n+m + reduced acceptor + O2 = 4-dehydro-beta-D-glucosyl-[(1-&gt;4)-beta-D-glucosyl]n-1 + [(1-&gt;4)-beta-D-glucosyl]m + acceptor + H2O.. In terms of biological role, lytic polysaccharide monooxygenase (LPMO) that depolymerizes crystalline and amorphous polysaccharides via the oxidation of scissile alpha- or beta-(1-4)-glycosidic bonds, yielding C1 or C4 oxidation products. Catalysis by LPMOs requires the reduction of the active-site copper from Cu(II) to Cu(I) by a reducing agent and H(2)O(2) or O(2) as a cosubstrate. Shows activity on beta-glucan and amorphous cellulose. Does not show beta-1-3-glucanase, beta-1,6-glucanase, mannanase, xylanase, beta-1,3-galactosidase, amylase, pectinase, nor chitinase activities. In Hypocrea jecorina (Trichoderma reesei), this protein is AA9 family lytic polysaccharide monooxygenase cel61A.